The following is a 71-amino-acid chain: uncharacterized protein (71 aa).

The protein belongs to the ycf40 family.

The protein localises to the plastid. Its subcellular location is the chloroplast. This is an uncharacterized protein from Porphyra purpurea (Red seaweed).